Here is a 429-residue protein sequence, read N- to C-terminus: MADTIIEAITAREVLDSRGNPTIEVDVYVESGDMGRAIVPSGASTGAFEALELRDGDKSRYGGKGVLKAVEHVNTTIAEALEGEDAADQVSIDRKLIELDGTENKGRLGANAILGVSLACAKAAAAAHDLPLYRYLGGVHAHVLPVPMMNILNGGKHAQNSTDFQEFMIMPVGAPSFREALRWGSEIYQSLKKVIHDRGGSTNVGDEGGFAPSLPTNEAALQIIMEAIERAGYKPGEQVMLAMDPACTELYKDGKYHLEREGRSLTSAEMVEYWDDIAARYPLISLEDGLAEEDWEGWKLLRARLGDRIQLVGDDFLVTNVKRLARAISEQAANSILIKLNQIGTLTETLDAISMANRAGWTAVVSHRSGESEDVTIADLVVATNAGQIKTGAPARTDRVAKYNQLLRIEEELGSAAHYAGMGAFRIRR.

Glutamine 165 lines the (2R)-2-phosphoglycerate pocket. Glutamate 207 (proton donor) is an active-site residue. Mg(2+) is bound by residues aspartate 244, glutamate 287, and aspartate 314. The (2R)-2-phosphoglycerate site is built by lysine 339, arginine 368, serine 369, and lysine 390. The active-site Proton acceptor is lysine 339.

This sequence belongs to the enolase family. Mg(2+) serves as cofactor.

The protein resides in the cytoplasm. It localises to the secreted. It is found in the cell surface. The enzyme catalyses (2R)-2-phosphoglycerate = phosphoenolpyruvate + H2O. The protein operates within carbohydrate degradation; glycolysis; pyruvate from D-glyceraldehyde 3-phosphate: step 4/5. Its function is as follows. Catalyzes the reversible conversion of 2-phosphoglycerate (2-PG) into phosphoenolpyruvate (PEP). It is essential for the degradation of carbohydrates via glycolysis. In Roseiflexus sp. (strain RS-1), this protein is Enolase.